We begin with the raw amino-acid sequence, 219 residues long: Glycosylphosphatidylinositol anchor biosynthesis protein 11 (219 aa).

Over 1–45 the chain is Cytoplasmic; it reads MPAKKRTRKTVKKTVSFSDDTTLTTHQNREKKNVDHDRPPVYVRK. Serine 16 bears the Phosphoserine mark. The helical transmembrane segment at 46-66 threads the bilayer; it reads TPLMTFPYHLVALLYYYVFVS. Serine 67 is a topological domain (lumenal). A helical transmembrane segment spans residues 68–88; it reads NFNTVKLLSFLIPTQVAYLVL. Residues 89 to 108 are Cytoplasmic-facing; it reads QFNKCTVYGNKIIKINYSLT. Residues 109 to 129 traverse the membrane as a helical segment; it reads IICLGVTFLLSFPTMLLTILF. The Lumenal segment spans residues 130–135; that stretch reads GAPLMD. A helical membrane pass occupies residues 136–156; sequence LLWETWLLSLHFAFLAYPAVY. Topologically, residues 157–170 are cytoplasmic; the sequence is SVFNCDFKVGLWKK. A helical membrane pass occupies residues 171–191; the sequence is YFIFIVVGGWISCVVIPLDWD. Residues 192-198 lie on the Lumenal side of the membrane; it reads RDWQNWP. The helical transmembrane segment at 199–217 threads the bilayer; it reads IPIVVGGYLGALVGYTIGA. Residues 218–219 lie on the Cytoplasmic side of the membrane; sequence YI.

Belongs to the PIGF family.

The protein resides in the endoplasmic reticulum membrane. Its pathway is glycolipid biosynthesis; glycosylphosphatidylinositol-anchor biosynthesis. Acts in the GPI biosynthetic pathway between GlcNAc-PI synthesis and GPI transfer to protein. Required for the formation of complete GPI precursors CP1 and CP2. This is Glycosylphosphatidylinositol anchor biosynthesis protein 11 (GPI11) from Saccharomyces cerevisiae (strain ATCC 204508 / S288c) (Baker's yeast).